Reading from the N-terminus, the 202-residue chain is Ras-related protein RABD2b (202 aa).

Residues Gly15–Cys23, Tyr33–Thr40, Asp63–Gln67, Asn121–Asp124, and Ser151–Lys153 contribute to the GTP site. Positions Tyr37 to Phe45 match the Effector region motif. The disordered stretch occupies residues Ala174–Ser202. The segment covering Pro192–Ser202 has biased composition (polar residues). 2 S-geranylgeranyl cysteine lipidation sites follow: Cys199 and Cys200.

Belongs to the small GTPase superfamily. Rab family.

The protein localises to the golgi apparatus. Its subcellular location is the trans-Golgi network membrane. It localises to the golgi apparatus membrane. Protein transport. Regulator of membrane traffic from the Golgi apparatus towards the endoplasmic reticulum (ER). The chain is Ras-related protein RABD2b (RABD2B) from Arabidopsis thaliana (Mouse-ear cress).